Here is a 180-residue protein sequence, read N- to C-terminus: Stathmin-3 (180 aa).

2 S-palmitoyl cysteine lipidation sites follow: Cys22 and Cys24. The SLD domain maps to 38–180; that stretch reads GDMEVKQLDK…NKEQREEMSG (143 aa). Residues Ser50, Ser60, Ser65, Ser68, Ser72, Ser73, and Ser81 each carry the phosphoserine modification. The interval 58–81 is disordered; it reads LKSPSDLSPESPVLSSPPKRKDAS. Low complexity predominate over residues 60–74; it reads SPSDLSPESPVLSSP. Residues 75-179 are a coiled coil; the sequence is PKRKDASLEE…RNKEQREEMS (105 aa).

The protein belongs to the stathmin family. As to quaternary structure, interacts with STAT3. Interacts with CLU (secreted form); this interaction may act as an important modulator during neuronal differentiation. Post-translationally, N-terminal palmitoylation promotes specific anchoring to the cytosolic leaflet of Golgi membranes and subsequent vesicular trafficking along dendrites and axons. Neuronal Stathmins are substrates for palmitoyltransferases ZDHHC3, ZDHHC7 and ZDHHC15. In terms of tissue distribution, neuron specific.

The protein localises to the golgi apparatus. The protein resides in the cell projection. It is found in the growth cone. Its subcellular location is the axon. It localises to the cytoplasm. The protein localises to the cytosol. Its function is as follows. Exhibits microtubule-destabilizing activity, which is antagonized by STAT3. The polypeptide is Stathmin-3 (Stmn3) (Rattus norvegicus (Rat)).